A 227-amino-acid chain; its full sequence is PKHD-type hydroxylase Bxeno_B2756 (227 aa).

Positions 80-179 (QVYPPLFNRY…RVASFFWVQS (100 aa)) constitute a Fe2OG dioxygenase domain. H98, D100, and H160 together coordinate Fe cation. R170 contributes to the 2-oxoglutarate binding site.

Fe(2+) serves as cofactor. It depends on L-ascorbate as a cofactor.

This chain is PKHD-type hydroxylase Bxeno_B2756, found in Paraburkholderia xenovorans (strain LB400).